The chain runs to 632 residues: CREB-regulated transcription coactivator 3 (632 aa).

S66 is modified (phosphoserine). Residues 105-115 (NRLHSSHHRPV) show a composition bias toward basic residues. Positions 105–156 (NRLHSSHHRPVEKHGRQCDSSPYGSVYLSPPPDNNWRRTNSDSALHTSASSS) are disordered. Position 133 is a phosphoserine (S133). S145 is subject to Phosphoserine; by SIK2. Positions 145–156 (SDSALHTSASSS) are enriched in low complexity. T151 carries the phosphothreonine modification. S293 carries the phosphoserine modification. Residues 310 to 338 (GIQNTCSNPSIQATMNNNVNNHTPPGRNN) show a composition bias toward polar residues. The segment at 310–455 (GIQNTCSNPS…ESQNFQPPSP (146 aa)) is disordered. A compositionally biased stretch (low complexity) spans 339 to 360 (PTLHPSLRLSSLSNPSLPTSAL). Phosphoserine occurs at positions 372 and 391. Residues 372-405 (SPLTLTPGSESNRSISNQFSPTSPMDMLPNSQGV) are compositionally biased toward polar residues. Over residues 413–424 (SLPPLEPPPPYP) the composition is skewed to pro residues. Over residues 425–440 (LYTDQPQPQLHHTQQQ) the composition is skewed to low complexity. S556 carries the post-translational modification Phosphoserine.

It belongs to the TORC family. In terms of assembly, binding, as a tetramer, through its N-terminal region, with the bZIP domain of creb1 enhances recruitment of taf4 to the promoter. 'Arg-300' in the bZIP domain of creb1 is essential for this interaction.

It is found in the nucleus. The protein localises to the cytoplasm. Functionally, transcriptional coactivator for creb1 which activates transcription through both consensus and variant cAMP response element (CRE) sites. Acts as a coactivator, in the SIK/TORC signaling pathway, being active when dephosphorylated and acts independently of creb1 'Ser-119' phosphorylation. Enhances the interaction of creb1 with taf4. Regulates the expression of specific CREB-activated genes such as the steroidogenic gene, StAR. Potent coactivator of ppargc1a and inducer of mitochondrial biogenesis in muscle cells. The chain is CREB-regulated transcription coactivator 3 (crtc3) from Xenopus laevis (African clawed frog).